The chain runs to 697 residues: Phosphatase and actin regulator 4-B (697 aa).

The RPEL 1 repeat unit spans residues 42-67; the sequence is EVLERKISMRKPREELVKRGLIVDVP. Disordered stretches follow at residues 63-381 and 450-569; these read IVDV…LTLA and LKVP…SKDE. The segment covering 189–202 has biased composition (basic and acidic residues); it reads HVPEKTSEKYRPKS. Pro residues-rich tracts occupy residues 317 to 326 and 370 to 380; these read PSPPLPPKRA and APNPPVPPLTL. 3 stretches are compositionally biased toward acidic residues: residues 454 to 469, 501 to 514, and 522 to 532; these read DDDDDEDELSLEDESL, QEEDEEEGVSDTDS, and EEDEDEEEEET. RPEL repeat units lie at residues 579–604 and 616–641; these read TQLNRRLSQRPTAEELEQRNILQKNE and RRLTRKLSQRPTVAELLERKILRFNE.

It belongs to the phosphatase and actin regulator family. In terms of assembly, binds ppp1ca and actin.

It localises to the cytoplasm. The protein resides in the cell projection. Its subcellular location is the lamellipodium. Its function is as follows. Regulator of protein phosphatase 1 (PP1) required for neural tube and optic fissure closure, and enteric neural crest cell (ENCCs) migration during development. Acts as an activator of PP1. During neural tube closure, localizes to the ventral neural tube and activates PP1, leading to down-regulate cell proliferation within cranial neural tissue and the neural retina. Also acts as a regulator of migration of enteric neural crest cells (ENCCs) by activating PP1, leading to repression of the integrin signaling through the rho/rock pathway. The chain is Phosphatase and actin regulator 4-B (phactr4-b) from Xenopus laevis (African clawed frog).